The primary structure comprises 283 residues: Small ribosomal subunit protein uS3 (283 aa).

The KH type-2 domain occupies 39–107 (VRAYLKTKLK…PVHVNIEEIR (69 aa)). The interval 209-283 (PSGEPPVDLT…GAVPAEKAGE (75 aa)) is disordered. The span at 217 to 235 (LTKEDDTKRRGPRRDDGKP) shows a compositional bias: basic and acidic residues. Low complexity predominate over residues 244–260 (PEGQPGAAAAPGAAPAA).

This sequence belongs to the universal ribosomal protein uS3 family. As to quaternary structure, part of the 30S ribosomal subunit. Forms a tight complex with proteins S10 and S14.

In terms of biological role, binds the lower part of the 30S subunit head. Binds mRNA in the 70S ribosome, positioning it for translation. This is Small ribosomal subunit protein uS3 from Herminiimonas arsenicoxydans.